The following is a 507-amino-acid chain: RNA-splicing ligase RtcB homolog (507 aa).

Mn(2+) contacts are provided by aspartate 121, cysteine 124, histidine 229, histidine 261, and histidine 355. Position 228 to 232 (228 to 232 (NHYAE)) interacts with GMP. GMP-binding positions include 355 to 356 (HN), 404 to 407 (GGTM), serine 411, 430 to 433 (HGAG), and lysine 506. Histidine 430 serves as the catalytic GMP-histidine intermediate.

It belongs to the RtcB family. In terms of assembly, catalytic component of the tRNA-splicing ligase complex. Mn(2+) is required as a cofactor.

It carries out the reaction a 3'-end 3'-phospho-ribonucleotide-RNA + a 5'-end dephospho-ribonucleoside-RNA + GTP = a ribonucleotidyl-ribonucleotide-RNA + GMP + diphosphate. The catalysed reaction is a 3'-end 2',3'-cyclophospho-ribonucleotide-RNA + a 5'-end dephospho-ribonucleoside-RNA + GTP + H2O = a ribonucleotidyl-ribonucleotide-RNA + GMP + diphosphate + H(+). Functionally, catalytic subunit of the tRNA-splicing ligase complex that acts by directly joining spliced tRNA halves to mature-sized tRNAs by incorporating the precursor-derived splice junction phosphate into the mature tRNA as a canonical 3',5'-phosphodiester. May act as an RNA ligase with broad substrate specificity, and may function toward other RNAs. In Micromonas pusilla (strain CCMP1545) (Picoplanktonic green alga), this protein is RNA-splicing ligase RtcB homolog.